The following is a 292-amino-acid chain: Phosphatidylglycerol--prolipoprotein diacylglyceryl transferase (292 aa).

The next 6 helical transmembrane spans lie at 25–45 (IALH…WWYA), 70–90 (FVVW…VLVW), 101–121 (AIIA…GIII), 138–158 (FDIV…CNFI), 193–213 (FMEG…FKAL), and 255–275 (GFTY…YLLL). Residue arginine 153 participates in a 1,2-diacyl-sn-glycero-3-phospho-(1'-sn-glycerol) binding.

This sequence belongs to the Lgt family.

The protein localises to the cell inner membrane. It carries out the reaction L-cysteinyl-[prolipoprotein] + a 1,2-diacyl-sn-glycero-3-phospho-(1'-sn-glycerol) = an S-1,2-diacyl-sn-glyceryl-L-cysteinyl-[prolipoprotein] + sn-glycerol 1-phosphate + H(+). Its pathway is protein modification; lipoprotein biosynthesis (diacylglyceryl transfer). Catalyzes the transfer of the diacylglyceryl group from phosphatidylglycerol to the sulfhydryl group of the N-terminal cysteine of a prolipoprotein, the first step in the formation of mature lipoproteins. The protein is Phosphatidylglycerol--prolipoprotein diacylglyceryl transferase of Bartonella quintana (strain Toulouse) (Rochalimaea quintana).